The following is a 98-amino-acid chain: Acylphosphatase (98 aa).

One can recognise an Acylphosphatase-like domain in the interval 12-98 (TYYVRVRGVV…DKRFERFQQH (87 aa)). Catalysis depends on residues arginine 27 and asparagine 45.

It belongs to the acylphosphatase family.

The catalysed reaction is an acyl phosphate + H2O = a carboxylate + phosphate + H(+). The sequence is that of Acylphosphatase (acyP) from Burkholderia thailandensis (strain ATCC 700388 / DSM 13276 / CCUG 48851 / CIP 106301 / E264).